A 439-amino-acid polypeptide reads, in one-letter code: Xaa-Pro dipeptidase (439 aa).

D244, D255, H335, E380, and E419 together coordinate Mn(2+).

It belongs to the peptidase M24B family. Bacterial-type prolidase subfamily. Mn(2+) serves as cofactor.

The catalysed reaction is Xaa-L-Pro dipeptide + H2O = an L-alpha-amino acid + L-proline. Its function is as follows. Splits dipeptides with a prolyl residue in the C-terminal position. The chain is Xaa-Pro dipeptidase from Shewanella woodyi (strain ATCC 51908 / MS32).